Here is a 441-residue protein sequence, read N- to C-terminus: MFAPPAARAMKVLDRSFFKKTIPTSAARIFNAKDISRCRKELTASRDTLPNNRVDPIRPDVDSERAQKGGKCLVLRPEVVHNDRTTWSPKLRDLEQDGTLGVIPFQLDLDYDFFTYSEITSAIIPPPETKQDDEIPQGFALAGHVAHLNLRERYWPYKYLIADVLADKNPMVKTVINKLDNVGTENAFRTFQYEVLHGPDDMNVELREQGCTFKFDFAKARQYATIMAGVGPFAIPAGKKKCFVWANDLNPESYKSLEDNIRINKVGDFVTPRNTDGADFIRQSAIDLLKSERSIPIYPKVKFSRSAPPTQKPVPDRTLVQPRTFQHYVMNLPASAITFLPSFIGLYSNIPGLSIGEAKKLFAPHTQQKLPMIHVHCFSTKSDDNVAETKEICAEISRQLQCEMTPETPDVNIHDVRDVAPKKRMFCASFRLPEEVAFREI.

The N-terminal 9 residues, 1–9, are a transit peptide targeting the mitochondrion; that stretch reads MFAPPAARA. S-adenosyl-L-methionine contacts are provided by residues R221, 248–249, 276–277, and N331; these read DL and DG.

It belongs to the class I-like SAM-binding methyltransferase superfamily. TRM5/TYW2 family. In terms of assembly, monomer.

Its subcellular location is the mitochondrion matrix. The protein resides in the nucleus. It is found in the cytoplasm. It carries out the reaction guanosine(37) in tRNA + S-adenosyl-L-methionine = N(1)-methylguanosine(37) in tRNA + S-adenosyl-L-homocysteine + H(+). Its function is as follows. Specifically methylates the N1 position of guanosine-37 in various cytoplasmic and mitochondrial tRNAs. Methylation is not dependent on the nature of the nucleoside 5' of the target nucleoside. This is the first step in the biosynthesis of wybutosine (yW), a modified base adjacent to the anticodon of tRNAs and required for accurate decoding. In Phaeosphaeria nodorum (strain SN15 / ATCC MYA-4574 / FGSC 10173) (Glume blotch fungus), this protein is tRNA (guanine(37)-N(1))-methyltransferase.